An 80-amino-acid polypeptide reads, in one-letter code: Cell division activator CedA (80 aa).

Belongs to the CedA family.

Functionally, activates the cell division inhibited by chromosomal DNA over-replication. This chain is Cell division activator CedA, found in Salmonella choleraesuis (strain SC-B67).